Reading from the N-terminus, the 305-residue chain is Putative UDP-glucose 4-epimerase (305 aa).

Residues 10 to 11, 30 to 35, 50 to 51, and 71 to 75 each bind NAD(+); these read FI, DNLTTG, DI, and QAAQI. Substrate contacts are provided by S115 and Y140. 2 residues coordinate NAD(+): Y140 and K144. Y140 functions as the Proton acceptor in the catalytic mechanism. Substrate-binding positions include N169, 183 to 184, 198 to 200, R207, and 263 to 266; these read VI, IIF, and REGE.

The protein belongs to the NAD(P)-dependent epimerase/dehydratase family. It depends on NAD(+) as a cofactor.

It catalyses the reaction UDP-alpha-D-glucose = UDP-alpha-D-galactose. It participates in carbohydrate metabolism; galactose metabolism. Its function is as follows. Involved in the metabolism of galactose. Catalyzes the conversion of UDP-galactose (UDP-Gal) to UDP-glucose (UDP-Glc) through a mechanism involving the transient reduction of NAD. The protein is Putative UDP-glucose 4-epimerase of Methanocaldococcus jannaschii (strain ATCC 43067 / DSM 2661 / JAL-1 / JCM 10045 / NBRC 100440) (Methanococcus jannaschii).